The sequence spans 334 residues: Aspartate carbamoyltransferase catalytic subunit (334 aa).

Arginine 71 and threonine 72 together coordinate carbamoyl phosphate. Lysine 99 lines the L-aspartate pocket. 3 residues coordinate carbamoyl phosphate: arginine 121, histidine 151, and glutamine 154. Residues arginine 184 and arginine 239 each coordinate L-aspartate. Carbamoyl phosphate is bound by residues glycine 280 and proline 281.

The protein belongs to the aspartate/ornithine carbamoyltransferase superfamily. ATCase family. As to quaternary structure, heterododecamer (2C3:3R2) of six catalytic PyrB chains organized as two trimers (C3), and six regulatory PyrI chains organized as three dimers (R2).

It carries out the reaction carbamoyl phosphate + L-aspartate = N-carbamoyl-L-aspartate + phosphate + H(+). The protein operates within pyrimidine metabolism; UMP biosynthesis via de novo pathway; (S)-dihydroorotate from bicarbonate: step 2/3. Functionally, catalyzes the condensation of carbamoyl phosphate and aspartate to form carbamoyl aspartate and inorganic phosphate, the committed step in the de novo pyrimidine nucleotide biosynthesis pathway. The sequence is that of Aspartate carbamoyltransferase catalytic subunit from Pseudomonas fluorescens biotype A.